The primary structure comprises 247 residues: 2-amino-5-formylamino-6-ribosylaminopyrimidin-4(3H)-one 5'-monophosphate deformylase (247 aa).

Fe cation-binding residues include Glu41, His43, Asp52, and His121.

The protein belongs to the creatininase superfamily. FAPy deformylase family. Homodimer. Requires Fe(2+) as cofactor. It depends on Zn(2+) as a cofactor.

The enzyme catalyses 2-amino-5-formylamino-6-(5-phospho-D-ribosylamino)pyrimidin-4(3H)-one + H2O = 2,5-diamino-6-(1-D-ribosylamino)pyrimidin-4(3H)-one 5'-phosphate + formate + H(+). It functions in the pathway cofactor biosynthesis; coenzyme F420 biosynthesis. It participates in cofactor biosynthesis; riboflavin biosynthesis. Its function is as follows. Catalyzes the hydrolysis of the formamide of 2-amino-5-formylamino-6-ribosylamino-4(3H)-pyrimidinone 5'-monophosphate (FAPy) to form 2,5-diamino-6-ribosylamino-4(3H)-pyrimidinone 5'-phosphate (APy). This Methanothermus fervidus (strain ATCC 43054 / DSM 2088 / JCM 10308 / V24 S) protein is 2-amino-5-formylamino-6-ribosylaminopyrimidin-4(3H)-one 5'-monophosphate deformylase.